The chain runs to 494 residues: Ankyrin repeat domain-containing protein 33B (494 aa).

The tract at residues 1 to 80 is disordered; the sequence is MVLLAGTGPE…SAESVPEGVP (80 aa). Positions 30-42 are enriched in acidic residues; it reads VEEDPADYEEFED. ANK repeat units follow at residues 84–113, 120–150, 154–183, 189–218, and 223–255; these read PETA…SVEE, NGRT…DVNW, EGNT…GLDL, FGFT…DVHA, and RGMS…PEQF. Residues 349 to 494 form a disordered region; it reads RAARGPQAQE…RRTAPWKKRT (146 aa). Over residues 371–382 the composition is skewed to basic and acidic residues; sequence TGQEDADSREGS. At S405 the chain carries Phosphoserine. 2 stretches are compositionally biased toward basic and acidic residues: residues 440-451 and 459-487; these read RPARKGSTKDSG and RYKE…ERRT. Residues 459–488 are a coiled coil; that stretch reads RYKEAKEEKRKAEEAEKKRQAEAQKERRTA.

The chain is Ankyrin repeat domain-containing protein 33B (ANKRD33B) from Homo sapiens (Human).